Reading from the N-terminus, the 278-residue chain is Putative ABC transporter ATP-binding protein MTBMA_c05830 (278 aa).

The region spanning Ile-4–Arg-239 is the ABC transporter domain. Gly-37–Ser-44 serves as a coordination point for ATP.

It belongs to the ABC transporter superfamily.

It is found in the cell membrane. In terms of biological role, probably part of an ABC transporter complex. Responsible for energy coupling to the transport system. This chain is Putative ABC transporter ATP-binding protein MTBMA_c05830, found in Methanothermobacter marburgensis (strain ATCC BAA-927 / DSM 2133 / JCM 14651 / NBRC 100331 / OCM 82 / Marburg) (Methanobacterium thermoautotrophicum).